Consider the following 256-residue polypeptide: 5-keto-4-deoxy-D-glucarate aldolase (256 aa).

The active-site Proton acceptor is the H50. Q151 lines the substrate pocket. E153 contributes to the Mg(2+) binding site. Positions 178 and 179 each coordinate substrate. D179 is a binding site for Mg(2+).

Belongs to the HpcH/HpaI aldolase family. KDGluc aldolase subfamily. Homohexamer; trimer of dimers. It depends on Mg(2+) as a cofactor.

The enzyme catalyses 5-dehydro-4-deoxy-D-glucarate = 2-hydroxy-3-oxopropanoate + pyruvate. The catalysed reaction is 2-dehydro-3-deoxy-D-glucarate = 2-hydroxy-3-oxopropanoate + pyruvate. It participates in carbohydrate acid metabolism; galactarate degradation; D-glycerate from galactarate: step 2/3. Its function is as follows. Catalyzes the reversible retro-aldol cleavage of both 5-keto-4-deoxy-D-glucarate and 2-keto-3-deoxy-D-glucarate to pyruvate and tartronic semialdehyde. In Klebsiella pneumoniae subsp. pneumoniae (strain ATCC 700721 / MGH 78578), this protein is 5-keto-4-deoxy-D-glucarate aldolase.